Here is a 22-residue protein sequence, read N- to C-terminus: Peptide PGLa-B1 (22 aa).

Position 22 is a leucine amide (L22).

In terms of tissue distribution, expressed by the skin glands.

Its subcellular location is the secreted. Has antibacterial and antifungal activity. The polypeptide is Peptide PGLa-B1 (Xenopus borealis (Kenyan clawed frog)).